We begin with the raw amino-acid sequence, 446 residues long: Argininosuccinate lyase (446 aa).

The protein belongs to the lyase 1 family. Argininosuccinate lyase subfamily.

It localises to the cytoplasm. The catalysed reaction is 2-(N(omega)-L-arginino)succinate = fumarate + L-arginine. It participates in amino-acid biosynthesis; L-arginine biosynthesis; L-arginine from L-ornithine and carbamoyl phosphate: step 3/3. The polypeptide is Argininosuccinate lyase (Parabacteroides distasonis (strain ATCC 8503 / DSM 20701 / CIP 104284 / JCM 5825 / NCTC 11152)).